Reading from the N-terminus, the 33-residue chain is Cytochrome b6-f complex subunit 5 (33 aa).

A helical transmembrane segment spans residues 5–25 (LLFGIILGLISCVLAGLFVSA).

The protein belongs to the PetG family. In terms of assembly, the 4 large subunits of the cytochrome b6-f complex are cytochrome b6, subunit IV (17 kDa polypeptide, PetD), cytochrome f and the Rieske protein, while the 4 small subunits are PetG, PetL, PetM and PetN. The complex functions as a dimer.

Its subcellular location is the plastid. It is found in the chloroplast thylakoid membrane. Component of the cytochrome b6-f complex, which mediates electron transfer between photosystem II (PSII) and photosystem I (PSI), cyclic electron flow around PSI, and state transitions. PetG is required for either the stability or assembly of the cytochrome b6-f complex. The protein is Cytochrome b6-f complex subunit 5 of Bigelowiella natans (Pedinomonas minutissima).